The sequence spans 193 residues: 3-isopropylmalate dehydratase small subunit (193 aa).

Belongs to the LeuD family. LeuD type 1 subfamily. As to quaternary structure, heterodimer of LeuC and LeuD.

It catalyses the reaction (2R,3S)-3-isopropylmalate = (2S)-2-isopropylmalate. It functions in the pathway amino-acid biosynthesis; L-leucine biosynthesis; L-leucine from 3-methyl-2-oxobutanoate: step 2/4. Catalyzes the isomerization between 2-isopropylmalate and 3-isopropylmalate, via the formation of 2-isopropylmaleate. The chain is 3-isopropylmalate dehydratase small subunit from Listeria monocytogenes serovar 1/2a (strain ATCC BAA-679 / EGD-e).